We begin with the raw amino-acid sequence, 440 residues long: APO protein 2, chloroplastic (440 aa).

The N-terminal 62 residues, 1 to 62 (MSITYSAISF…SLQLNSRVVL (62 aa)), are a transit peptide targeting the chloroplast. Positions 106 to 115 (ARERVKNNKD) are enriched in basic and acidic residues. The tract at residues 106–126 (ARERVKNNKDKPKRPLPPPKN) is disordered. 2 APO domains span residues 162 to 247 (ACGW…EIPE) and 332 to 417 (VCGY…VVPE).

It belongs to the APO family.

It localises to the plastid. The protein localises to the chloroplast. In terms of biological role, may be involved in the stable assembly of several 4Fe-4S cluster-containing complexes of chloroplasts. The protein is APO protein 2, chloroplastic (APO2) of Arabidopsis thaliana (Mouse-ear cress).